Here is a 110-residue protein sequence, read N- to C-terminus: uncharacterized protein (110 aa).

Transmembrane regions (helical) follow at residues 21 to 41 (IQLA…PQIC) and 63 to 83 (PSMI…IIVV).

The protein resides in the membrane. This is an uncharacterized protein from Saccharomyces cerevisiae (strain ATCC 204508 / S288c) (Baker's yeast).